Reading from the N-terminus, the 196-residue chain is UPF0319 protein VV0948 (196 aa).

Residues 1-19 (MKKMMILSALALFSSSLFA) form the signal peptide.

This sequence belongs to the UPF0319 family.

This chain is UPF0319 protein VV0948, found in Vibrio vulnificus (strain YJ016).